Reading from the N-terminus, the 768-residue chain is Ral guanine nucleotide dissociation stimulator-like 1 (768 aa).

The region spanning 65–196 (KIRTIKAGTL…RAQNLLEQFQ (132 aa)) is the N-terminal Ras-GEF domain. The Ras-GEF domain occupies 232–501 (SEDLVAEQLT…YALSCEIEAA (270 aa)). A Phosphoserine modification is found at serine 520. A disordered region spans residues 530 to 623 (PGSTPTKEQP…PPTCNNNPKI (94 aa)). 2 stretches are compositionally biased toward low complexity: residues 541-561 (SAAS…SCES) and 586-596 (ESSSSCSSIHS). A compositionally biased stretch (polar residues) spans 597 to 621 (MDTNSSGMSSLINPLSSPPTCNNNP). Residues 648–735 (DTCIIRISVE…FDFILRKKNS (88 aa)) enclose the Ras-associating domain.

As to quaternary structure, interacts with Ras.

Probable guanine nucleotide exchange factor. This chain is Ral guanine nucleotide dissociation stimulator-like 1 (Rgl1), found in Mus musculus (Mouse).